A 688-amino-acid polypeptide reads, in one-letter code: Potassium-transporting ATPase ATP-binding subunit (688 aa).

Transmembrane regions (helical) follow at residues 34–54 (PVMF…LAIL), 62–82 (AMFT…ANMA), 219–239 (VALT…TATL), and 260–280 (VLVA…LSAI). Asp313 acts as the 4-aspartylphosphate intermediate in catalysis. Residues Asp350, Glu354, 383–390 (FSAQTRMS), and Lys401 each bind ATP. Asp524 and Asp528 together coordinate Mg(2+). Transmembrane regions (helical) follow at residues 594–614 (FAII…LNIM), 622–642 (AILS…PLAL), and 662–682 (IYGL…DLLL).

The protein belongs to the cation transport ATPase (P-type) (TC 3.A.3) family. Type IA subfamily. The system is composed of three essential subunits: KdpA, KdpB and KdpC.

The protein resides in the cell inner membrane. The catalysed reaction is K(+)(out) + ATP + H2O = K(+)(in) + ADP + phosphate + H(+). Functionally, part of the high-affinity ATP-driven potassium transport (or Kdp) system, which catalyzes the hydrolysis of ATP coupled with the electrogenic transport of potassium into the cytoplasm. This subunit is responsible for energy coupling to the transport system and for the release of the potassium ions to the cytoplasm. In Yersinia pseudotuberculosis serotype I (strain IP32953), this protein is Potassium-transporting ATPase ATP-binding subunit.